Consider the following 179-residue polypeptide: Lebocin-4 (179 aa).

The N-terminal stretch at 1–16 (MYKFLVFSSVLVLFFA) is a signal peptide. The propeptide occupies 17 to 120 (QASCQRFIQP…RPIESHRNTR (104 aa)). Thr135 is a glycosylation site (O-linked (GalNAc...) threonine). Positions 153–179 (RRHASDDQEELRHHNEHFLIPRDILQD) are excised as a propeptide.

The protein belongs to the lebocin family. O-glycosylation is important for the antibacterial activity of lebocin. As to expression, hemolymph. Produced in fat body.

Its subcellular location is the secreted. Antibacterial peptide. This Bombyx mori (Silk moth) protein is Lebocin-4 (LEB4).